The sequence spans 118 residues: uncharacterized protein (118 aa).

3 consecutive transmembrane segments (helical) span residues 17-37 (IIII…FAIL), 60-80 (INYT…IMIF), and 90-110 (YIEQ…GSFW).

It localises to the membrane. This is an uncharacterized protein from Acanthamoeba polyphaga mimivirus (APMV).